The primary structure comprises 581 residues: Penicillin-binding protein activator LpoA (581 aa).

Residues 1-26 form the signal peptide; the sequence is MLSILMQGLRLKKCFLPILVMFFLAG. The N-palmitoyl cysteine moiety is linked to residue C27. C27 carries S-diacylglycerol cysteine lipidation.

The protein belongs to the LpoA family. In terms of assembly, interacts with PBP1a.

Its subcellular location is the cell outer membrane. Its function is as follows. Regulator of peptidoglycan synthesis that is essential for the function of penicillin-binding protein 1A (PBP1a). The chain is Penicillin-binding protein activator LpoA from Histophilus somni (strain 129Pt) (Haemophilus somnus).